A 217-amino-acid chain; its full sequence is Tectonin-1 (217 aa).

Tandem repeats lie at residues 2-37 (VHWE…HWDG), 38-74 (HKWH…DRSN), 75-111 (NKWT…DHHH), 112-146 (NKWD…RWDG), 147-182 (SKVD…LKHG), and 183-217 (KDWE…KATL). Residues 2–217 (VHWEKHEGEL…KLHHIYKATL (216 aa)) are 6 X approximate tandem repeats.

It belongs to the tectonin family.

The protein localises to the cell surface. The protein resides in the cytoplasmic vesicle membrane. Its function is as follows. Probably involved in bacterial recognition. May be a lectin that function as part of a transmembrane signaling complex during phagocytosis. This is Tectonin-1 (TECA) from Physarum polycephalum (Slime mold).